The following is a 111-amino-acid chain: MIDAIQSVGAFSNLKEAEGTSLTASTALSLPSAGASAPQSQSFAEVLGTMTTDAIRSMKSAEGVSLQAIRGEANTREVVDAVMNAEQSLQTALAIRDKVVTAYLEIARMQI.

Belongs to the FliE family.

It localises to the bacterial flagellum basal body. This Sinorhizobium fredii (strain NBRC 101917 / NGR234) protein is Flagellar hook-basal body complex protein FliE.